A 189-amino-acid chain; its full sequence is Elongation factor P (189 aa).

This sequence belongs to the elongation factor P family.

The protein resides in the cytoplasm. It functions in the pathway protein biosynthesis; polypeptide chain elongation. Involved in peptide bond synthesis. Stimulates efficient translation and peptide-bond synthesis on native or reconstituted 70S ribosomes in vitro. Probably functions indirectly by altering the affinity of the ribosome for aminoacyl-tRNA, thus increasing their reactivity as acceptors for peptidyl transferase. The sequence is that of Elongation factor P from Pseudomonas putida (strain GB-1).